A 507-amino-acid chain; its full sequence is Keratin, type II cuticular Hb5 (507 aa).

Positions 1 to 123 (MSCRSYRISP…PNAQCVKYEE (123 aa)) are head. The IF rod domain maps to 123-434 (EKEQIKCLNS…RLLEGEEQRL (312 aa)). Residues 124–158 (KEQIKCLNSKFAAFIDKVRFLEQQNKLLETKWQFY) form a coil 1A region. Residues 159 to 168 (QNRKCCESNL) form a linker 1 region. Residues 169-269 (EPLFGGYIEA…YEEEVCVLQA (101 aa)) form a coil 1B region. Residue Lys-229 forms a Glycyl lysine isopeptide (Lys-Gly) (interchain with G-Cter in SUMO1) linkage. Residues 270–286 (HISDTSVIVKMDNSRDL) form a linker 12 region. The coil 2 stretch occupies residues 287 to 430 (NMDCVVAEIK…ATYRRLLEGE (144 aa)). The tail stretch occupies residues 431–507 (EQRLCEGVGS…CGSSRSVRFA (77 aa)).

This sequence belongs to the intermediate filament family. As to quaternary structure, heterotetramer of two type I and two type II keratins.

The sequence is that of Keratin, type II cuticular Hb5 (Krt85) from Mus musculus (Mouse).